We begin with the raw amino-acid sequence, 350 residues long: N-acetyl-gamma-glutamyl-phosphate reductase (350 aa).

The active site involves C153.

Belongs to the NAGSA dehydrogenase family. Type 1 subfamily.

The protein resides in the cytoplasm. The enzyme catalyses N-acetyl-L-glutamate 5-semialdehyde + phosphate + NADP(+) = N-acetyl-L-glutamyl 5-phosphate + NADPH + H(+). It participates in amino-acid biosynthesis; L-arginine biosynthesis; N(2)-acetyl-L-ornithine from L-glutamate: step 3/4. In terms of biological role, catalyzes the NADPH-dependent reduction of N-acetyl-5-glutamyl phosphate to yield N-acetyl-L-glutamate 5-semialdehyde. The protein is N-acetyl-gamma-glutamyl-phosphate reductase of Gloeobacter violaceus (strain ATCC 29082 / PCC 7421).